The sequence spans 161 residues: MSQLTHINAAGEAHMVDVSAKAETVREARAEAFVTMLPETLAMIIDGSHHKGDVFATARIAGIQAAKRTWDLIPLCHPLMLSKVEVNLLADPEHSRVRIESLCRLTGKTGVEMEALTAASVAALTIYDMCKAVQKDMVIGPVRLLTKSGGKSGDFKADSHD.

Residues 75 to 77 (LCH) and 113 to 114 (ME) each bind substrate. D128 is a catalytic residue.

The protein belongs to the MoaC family. Homohexamer; trimer of dimers.

It catalyses the reaction (8S)-3',8-cyclo-7,8-dihydroguanosine 5'-triphosphate = cyclic pyranopterin phosphate + diphosphate. It functions in the pathway cofactor biosynthesis; molybdopterin biosynthesis. Its function is as follows. Catalyzes the conversion of (8S)-3',8-cyclo-7,8-dihydroguanosine 5'-triphosphate to cyclic pyranopterin monophosphate (cPMP). The polypeptide is Cyclic pyranopterin monophosphate synthase (Enterobacter sp. (strain 638)).